We begin with the raw amino-acid sequence, 183 residues long: ATP-dependent protease subunit HslV (183 aa).

Residue Thr-7 is part of the active site. 3 residues coordinate Na(+): Gly-162, Cys-165, and Thr-168.

It belongs to the peptidase T1B family. HslV subfamily. As to quaternary structure, a double ring-shaped homohexamer of HslV is capped on each side by a ring-shaped HslU homohexamer. The assembly of the HslU/HslV complex is dependent on binding of ATP.

The protein resides in the cytoplasm. The catalysed reaction is ATP-dependent cleavage of peptide bonds with broad specificity.. With respect to regulation, allosterically activated by HslU binding. Protease subunit of a proteasome-like degradation complex believed to be a general protein degrading machinery. This is ATP-dependent protease subunit HslV from Alkalilimnicola ehrlichii (strain ATCC BAA-1101 / DSM 17681 / MLHE-1).